A 47-amino-acid polypeptide reads, in one-letter code: Small, acid-soluble spore protein N (47 aa).

The interval 1–47 (MPREHDKQSKFAPSHLGTKPVEYKRNKGKKMHDKSGETPIIMQTKGE) is disordered.

The protein belongs to the SspN family.

The protein localises to the spore core. In Bacillus licheniformis (strain ATCC 14580 / DSM 13 / JCM 2505 / CCUG 7422 / NBRC 12200 / NCIMB 9375 / NCTC 10341 / NRRL NRS-1264 / Gibson 46), this protein is Small, acid-soluble spore protein N.